The primary structure comprises 260 residues: Proteasome subunit alpha (260 aa).

A compositionally biased stretch (low complexity) spans 237–248 (ASTDAPAAAADS). The interval 237 to 260 (ASTDAPAAAADSADVEERPDSEAP) is disordered. Over residues 251 to 260 (VEERPDSEAP) the composition is skewed to basic and acidic residues.

This sequence belongs to the peptidase T1A family. As to quaternary structure, the 20S proteasome core is composed of 14 alpha and 14 beta subunits that assemble into four stacked heptameric rings, resulting in a barrel-shaped structure. The two inner rings, each composed of seven catalytic beta subunits, are sandwiched by two outer rings, each composed of seven alpha subunits. The catalytic chamber with the active sites is on the inside of the barrel. Has a gated structure, the ends of the cylinder being occluded by the N-termini of the alpha-subunits. Is capped by the proteasome-associated ATPase, ARC.

It is found in the cytoplasm. It functions in the pathway protein degradation; proteasomal Pup-dependent pathway. The formation of the proteasomal ATPase ARC-20S proteasome complex, likely via the docking of the C-termini of ARC into the intersubunit pockets in the alpha-rings, may trigger opening of the gate for substrate entry. Interconversion between the open-gate and close-gate conformations leads to a dynamic regulation of the 20S proteasome proteolysis activity. In terms of biological role, component of the proteasome core, a large protease complex with broad specificity involved in protein degradation. This Salinispora tropica (strain ATCC BAA-916 / DSM 44818 / JCM 13857 / NBRC 105044 / CNB-440) protein is Proteasome subunit alpha.